A 465-amino-acid polypeptide reads, in one-letter code: L-seryl-tRNA(Sec) selenium transferase (465 aa).

Lysine 294 carries the post-translational modification N6-(pyridoxal phosphate)lysine.

The protein belongs to the SelA family. The cofactor is pyridoxal 5'-phosphate.

It localises to the cytoplasm. The catalysed reaction is L-seryl-tRNA(Sec) + selenophosphate + H(+) = L-selenocysteinyl-tRNA(Sec) + phosphate. Its pathway is aminoacyl-tRNA biosynthesis; selenocysteinyl-tRNA(Sec) biosynthesis; selenocysteinyl-tRNA(Sec) from L-seryl-tRNA(Sec) (bacterial route): step 1/1. Functionally, converts seryl-tRNA(Sec) to selenocysteinyl-tRNA(Sec) required for selenoprotein biosynthesis. The sequence is that of L-seryl-tRNA(Sec) selenium transferase from Mannheimia succiniciproducens (strain KCTC 0769BP / MBEL55E).